Reading from the N-terminus, the 577-residue chain is Thrombomodulin (577 aa).

Positions 1-16 (MLGIFFLGVLAPASLG) are cleaved as a signal peptide. Topologically, residues 17 to 517 (LSALAKLQPT…GPPSARPVHS (501 aa)) are extracellular. The C-type lectin domain maps to 31–167 (VEHECFALFQ…TETQGFLCEF (137 aa)). An N-linked (GlcNAc...) asparagine glycan is attached at Asn113. Residues Cys135 and Cys156 are joined by a disulfide bond. EGF-like domains lie at 240–280 (GAWN…RSCA) and 283–323 (VVQS…HRCE). An N-linked (GlcNAc...) asparagine glycan is attached at Asn243. Disulfide bonds link Cys244-Cys255, Cys251-Cys264, Cys266-Cys279, Cys287-Cys295, Cys291-Cys307, Cys309-Cys322, Cys328-Cys339, Cys335-Cys348, Cys350-Cys361, Cys368-Cys377, Cys373-Cys387, Cys389-Cys403, Cys407-Cys416, Cys412-Cys424, Cys426-Cys438, Cys444-Cys454, Cys449-Cys463, and Cys465-Cys479. The N-linked (GlcNAc...) asparagine glycan is linked to Asn256. Residues 324–362 (DVDDCKQGPNPCPQLCVNTKGGFECFCYDGYELVDGECV) form the EGF-like 3; calcium-binding domain. EGF-like domains lie at 364-404 (LLDP…HKCE) and 403-439 (CEMF…SVCT). Asn408 carries an N-linked (GlcNAc...) asparagine glycan. Positions 440-480 (DIDECSQGECFTSECRNFPGSYECICGPDTALAGQISKDCD) constitute an EGF-like 6; calcium-binding domain. Residues 476–513 (SKDCDPIPVREDTKEEEGSGEPPVSPTPGSPTGPPSAR) form a disordered region. The span at 477–492 (KDCDPIPVREDTKEEE) shows a compositional bias: basic and acidic residues. Residue Ser494 is glycosylated (O-linked (Xyl...) (chondroitin sulfate) serine). The segment covering 498–512 (PVSPTPGSPTGPPSA) has biased composition (pro residues). The chain crosses the membrane as a helical span at residues 518–541 (GVLIGISIASLSLVVALLALLCHL). Topologically, residues 542 to 577 (RKKQGAARAELEYKCASSAKEVVLQHVRTDRTLQKF) are cytoplasmic.

As to quaternary structure, interacts with ITGAL, ITGAM and ITGB2. Interacts with thrombin/F2; this interaction switches the specificity of thrombin from a procoagulant to an anticoagulant and antifibrinolytic protease. Interacts with ANGP1 and ANGP2; these interactions significantly inhibit the generation of activated PC and TAFIa/CPB2 by the thrombin/thrombomodulin complex. Interacts with PF4; this interaction enhances generation of activated protein C. Interacts with HMGB1; this interaction inhibits HMGB1 inflammatory activity. In terms of tissue distribution, endothelial cells are unique in synthesizing thrombomodulin.

It localises to the membrane. Endothelial cell receptor that plays a critical role in regulating several physiological processes including hemostasis, coagulation, fibrinolysis, inflammation, and angiogenesis. Acts as a cofactor for thrombin activation of protein C/PROC on the surface of vascular endothelial cells leading to initiation of the activated protein C anticoagulant pathway. Also accelerates the activation of the plasma carboxypeptidase B2/CPB2, which catalyzes removal of C-terminal basic amino acids from its substrates including kinins or anaphylatoxins leading to fibrinolysis inhibition. Plays critical protective roles in changing the cleavage specificity of protease-activated receptor 1/PAR1, inhibiting endothelial cell permeability and inflammation. Suppresses inflammation distinctly from its anticoagulant cofactor activity by sequestering HMGB1 thereby preventing it from engaging cellular receptors such as RAGE and contributing to the inflammatory response. This is Thrombomodulin (Thbd) from Mus musculus (Mouse).